A 500-amino-acid polypeptide reads, in one-letter code: Protein FAM114A2 (500 aa).

The interval Met-1–Asp-82 is disordered. Residues Ser-93, Ser-152, and Ser-215 each carry the phosphoserine modification.

It belongs to the FAM114 family.

This is Protein FAM114A2 (FAM114A1) from Bos taurus (Bovine).